We begin with the raw amino-acid sequence, 137 residues long: MRLRVVAVGRPRLAYARLGVEEYARRMRRYAPLDLVFVRKGEELLPKAEGHRKVVLDERGRLLTTEELYRRLLAWEGERVAFLVGGAEGHPEAVREEADLLLSLSPLTLQHELALLVLMEQLYRVLTLRAGHPYHRP.

Residues L56, G85, and 104–109 each bind S-adenosyl-L-methionine; that span reads LSPLTL.

It belongs to the RNA methyltransferase RlmH family. Homodimer.

The protein localises to the cytoplasm. It carries out the reaction pseudouridine(1915) in 23S rRNA + S-adenosyl-L-methionine = N(3)-methylpseudouridine(1915) in 23S rRNA + S-adenosyl-L-homocysteine + H(+). Functionally, specifically methylates the pseudouridine at position 1915 (m3Psi1915) in 23S rRNA. This is Ribosomal RNA large subunit methyltransferase H from Thermus thermophilus (strain ATCC 27634 / DSM 579 / HB8).